The following is a 291-amino-acid chain: S-methyl-5'-thioadenosine phosphorylase (291 aa).

Residues serine 12, 54–55 (RH), and 87–88 (SA) contribute to the phosphate site. Methionine 185 is a binding site for substrate. Threonine 186 provides a ligand contact to phosphate. 209–211 (DFD) provides a ligand contact to substrate.

This sequence belongs to the PNP/MTAP phosphorylase family. MTAP subfamily. As to quaternary structure, homohexamer. Dimer of a homotrimer.

The catalysed reaction is S-methyl-5'-thioadenosine + phosphate = 5-(methylsulfanyl)-alpha-D-ribose 1-phosphate + adenine. It participates in amino-acid biosynthesis; L-methionine biosynthesis via salvage pathway; S-methyl-5-thio-alpha-D-ribose 1-phosphate from S-methyl-5'-thioadenosine (phosphorylase route): step 1/1. In terms of biological role, catalyzes the reversible phosphorylation of S-methyl-5'-thioadenosine (MTA) to adenine and 5-methylthioribose-1-phosphate. Involved in the breakdown of MTA, a major by-product of polyamine biosynthesis. Responsible for the first step in the methionine salvage pathway after MTA has been generated from S-adenosylmethionine. Has broad substrate specificity with 6-aminopurine nucleosides as preferred substrates. This chain is S-methyl-5'-thioadenosine phosphorylase, found in Bradyrhizobium diazoefficiens (strain JCM 10833 / BCRC 13528 / IAM 13628 / NBRC 14792 / USDA 110).